Here is a 433-residue protein sequence, read N- to C-terminus: Enolase (433 aa).

(2R)-2-phosphoglycerate is bound at residue Gln166. Glu208 (proton donor) is an active-site residue. 3 residues coordinate Mg(2+): Asp245, Glu289, and Asp316. 4 residues coordinate (2R)-2-phosphoglycerate: Lys341, Arg370, Ser371, and Lys392. The active-site Proton acceptor is the Lys341.

It belongs to the enolase family. Mg(2+) is required as a cofactor.

It localises to the cytoplasm. The protein resides in the secreted. It is found in the cell surface. It carries out the reaction (2R)-2-phosphoglycerate = phosphoenolpyruvate + H2O. The protein operates within carbohydrate degradation; glycolysis; pyruvate from D-glyceraldehyde 3-phosphate: step 4/5. In terms of biological role, catalyzes the reversible conversion of 2-phosphoglycerate (2-PG) into phosphoenolpyruvate (PEP). It is essential for the degradation of carbohydrates via glycolysis. This Acetivibrio thermocellus (strain ATCC 27405 / DSM 1237 / JCM 9322 / NBRC 103400 / NCIMB 10682 / NRRL B-4536 / VPI 7372) (Clostridium thermocellum) protein is Enolase.